Consider the following 365-residue polypeptide: Putative glutamate--cysteine ligase 2-3 (365 aa).

Belongs to the glutamate--cysteine ligase type 2 family. YbdK subfamily.

It catalyses the reaction L-cysteine + L-glutamate + ATP = gamma-L-glutamyl-L-cysteine + ADP + phosphate + H(+). ATP-dependent carboxylate-amine ligase which exhibits weak glutamate--cysteine ligase activity. The chain is Putative glutamate--cysteine ligase 2-3 from Mycolicibacterium smegmatis (strain ATCC 700084 / mc(2)155) (Mycobacterium smegmatis).